A 326-amino-acid polypeptide reads, in one-letter code: Vitamin B12 import system permease protein BtuC (326 aa).

Transmembrane regions (helical) follow at residues 15–35, 61–81, 88–108, 112–132, 146–166, 184–204, 240–260, 274–294, and 302–322; these read WLLC…CAGE, LAVL…QALF, PGLL…VLLG, LPNW…TLIL, LLAG…AIYF, GGVD…LLWI, GWMV…GLVI, VLLP…DIVA, and ELPI…WLLL.

This sequence belongs to the binding-protein-dependent transport system permease family. FecCD subfamily. As to quaternary structure, the complex is composed of two ATP-binding proteins (BtuD), two transmembrane proteins (BtuC) and a solute-binding protein (BtuF).

The protein localises to the cell inner membrane. Part of the ABC transporter complex BtuCDF involved in vitamin B12 import. Involved in the translocation of the substrate across the membrane. The polypeptide is Vitamin B12 import system permease protein BtuC (Escherichia coli O7:K1 (strain IAI39 / ExPEC)).